A 465-amino-acid chain; its full sequence is Azaphilone cluster-specific transcription factor azaR (465 aa).

A compositionally biased stretch (low complexity) spans 1-16 (MSDSRTTTTKNNTTNH). The segment at 1 to 25 (MSDSRTTTTKNNTTNHKTSRQGPGS) is disordered. Residues 27-53 (CEECRRRKLRCDRQPQCQNCVDAGVYC) constitute a DNA-binding region (zn(2)-C6 fungal-type).

It localises to the nucleus. Its function is as follows. Transcription factor that regulates the expression of the gene cluster that mediates the biosynthesis of azaphilones, a class of fungal metabolites characterized by a highly oxygenated pyrano-quinone bicyclic core and exhibiting a broad range of bioactivities. The sequence is that of Azaphilone cluster-specific transcription factor azaR from Aspergillus niger (strain ATCC 1015 / CBS 113.46 / FGSC A1144 / LSHB Ac4 / NCTC 3858a / NRRL 328 / USDA 3528.7).